Consider the following 267-residue polypeptide: Tryptophan synthase alpha chain (267 aa).

Residues glutamate 49 and aspartate 60 each act as proton acceptor in the active site.

It belongs to the TrpA family. As to quaternary structure, tetramer of two alpha and two beta chains.

It carries out the reaction (1S,2R)-1-C-(indol-3-yl)glycerol 3-phosphate + L-serine = D-glyceraldehyde 3-phosphate + L-tryptophan + H2O. It functions in the pathway amino-acid biosynthesis; L-tryptophan biosynthesis; L-tryptophan from chorismate: step 5/5. Functionally, the alpha subunit is responsible for the aldol cleavage of indoleglycerol phosphate to indole and glyceraldehyde 3-phosphate. The sequence is that of Tryptophan synthase alpha chain from Salinispora arenicola (strain CNS-205).